Consider the following 79-residue polypeptide: Short neurotoxin 2 (79 aa).

Residues 1-21 form the signal peptide; it reads MKTLLLTLVMVTIMCLDLGYT. 4 cysteine pairs are disulfide-bonded: C24–C41, C34–C59, C63–C71, and C72–C77.

This sequence belongs to the three-finger toxin family. Short-chain subfamily. Type III alpha-neurotoxin sub-subfamily. As to expression, expressed by the venom gland.

The protein localises to the secreted. Its function is as follows. Binds with high affinity to muscle nicotinic acetylcholine receptor (nAChR) and hinders acetylcholine binding to the receptor, thereby impairing neuromuscular transmission. Competes with the binding of alpha-bungarotoxin on muscle AChR (from Torpedo) with an IC(50) of 0.30 uM. Causes muscle paralysis, spasms and increased respiration. The polypeptide is Short neurotoxin 2 (Pseudonaja textilis (Eastern brown snake)).